The sequence spans 982 residues: Glutamate [NMDA] receptor subunit 1 (982 aa).

Positions 1 to 22 (MRVAFIYRWLLCGAAIVNVLVA) are cleaved as a signal peptide. Residues 23–568 (QRHTASDNPS…TLVSFLQPFS (546 aa)) lie on the Extracellular side of the membrane. N-linked (GlcNAc...) asparagine glycans are attached at residues N253, N309, N340, N392, N449, N476, and N496. Glycine-binding positions include 525–527 (PLT) and R532. Residues 569–589 (NTLWILVMVSVHVVALVLYLL) form a helical membrane-spanning segment. Topologically, residues 590-646 (DRFSPFGRFKLSHSDSNEEKALNLSSAVWFAWGVLLNSGIGEGTPRSFSARVLGMVW) are cytoplasmic. Residues 647-667 (AGFAMIIVASYTANLAAFLVL) form a helical membrane-spanning segment. Residues 668–826 (ERPKTKLSGI…KTPNTLGLKN (159 aa)) are Extracellular-facing. N-linked (GlcNAc...) asparagine glycosylation is present at N688. The glycine site is built by S698 and D742. A helical membrane pass occupies residues 827–847 (MAGVFILVGVGIAGGVGLIII). Residues 848 to 982 (EVIYKKHQVK…YTSDVSHLVV (135 aa)) are Cytoplasmic-facing. The interval 948–982 (LTASQLGLGKTRPQQNPLPPRYSPGYTSDVSHLVV) is disordered. The segment covering 972 to 982 (GYTSDVSHLVV) has biased composition (polar residues).

The protein belongs to the glutamate-gated ion channel (TC 1.A.10.1) family. Forms a heteromeric NMDA channel with Nmdar2.

The protein localises to the cell membrane. It is found in the postsynaptic cell membrane. It localises to the postsynaptic density. In terms of biological role, NMDA receptor subtype of glutamate-gated ion channels with high calcium permeability and voltage-dependent sensitivity to magnesium. Mediated by glycine. This protein plays a key role in synaptic plasticity, synaptogenesis, excitotoxicity, memory acquisition and learning. It mediates neuronal functions in glutamate neurotransmission. Is involved in the cell surface targeting of NMDA receptors. Plays a role in associative learning and in long-term memory consolidation. The sequence is that of Glutamate [NMDA] receptor subunit 1 from Drosophila grimshawi (Hawaiian fruit fly).